Here is a 321-residue protein sequence, read N- to C-terminus: Methionyl-tRNA formyltransferase (321 aa).

(6S)-5,6,7,8-tetrahydrofolate is bound at residue 113 to 116; the sequence is SILP.

The protein belongs to the Fmt family.

It catalyses the reaction L-methionyl-tRNA(fMet) + (6R)-10-formyltetrahydrofolate = N-formyl-L-methionyl-tRNA(fMet) + (6S)-5,6,7,8-tetrahydrofolate + H(+). In terms of biological role, attaches a formyl group to the free amino group of methionyl-tRNA(fMet). The formyl group appears to play a dual role in the initiator identity of N-formylmethionyl-tRNA by promoting its recognition by IF2 and preventing the misappropriation of this tRNA by the elongation apparatus. In Vibrio atlanticus (strain LGP32) (Vibrio splendidus (strain Mel32)), this protein is Methionyl-tRNA formyltransferase.